A 362-amino-acid chain; its full sequence is Chorismate synthase (362 aa).

Residues Arg-48 and Arg-54 each contribute to the NADP(+) site. FMN contacts are provided by residues 125-127 (RSS), 238-239 (NA), Gly-286, 301-305 (KPTSS), and Arg-327.

It belongs to the chorismate synthase family. Homotetramer. It depends on FMNH2 as a cofactor.

The catalysed reaction is 5-O-(1-carboxyvinyl)-3-phosphoshikimate = chorismate + phosphate. The protein operates within metabolic intermediate biosynthesis; chorismate biosynthesis; chorismate from D-erythrose 4-phosphate and phosphoenolpyruvate: step 7/7. Its function is as follows. Catalyzes the anti-1,4-elimination of the C-3 phosphate and the C-6 proR hydrogen from 5-enolpyruvylshikimate-3-phosphate (EPSP) to yield chorismate, which is the branch point compound that serves as the starting substrate for the three terminal pathways of aromatic amino acid biosynthesis. This reaction introduces a second double bond into the aromatic ring system. The protein is Chorismate synthase of Granulibacter bethesdensis (strain ATCC BAA-1260 / CGDNIH1).